A 176-amino-acid polypeptide reads, in one-letter code: F(420)H(2) dehydrogenase subunit J (176 aa).

Helical transmembrane passes span Thr-13 to Ala-33, Ala-39 to Ala-59, Val-64 to Leu-84, Pro-99 to Thr-119, and Ile-140 to Leu-160.

Belongs to the complex I subunit 6 family. The FPO complex is composed of at least 13 different subunits. FpoA, FpoH, FpoJ, FpoK, FpoL, FpoM and FpoN proteins constitute the membrane sector of the complex.

It localises to the cell membrane. It carries out the reaction methanophenazine + reduced coenzyme F420-(gamma-L-Glu)(n) = dihydromethanophenazine + oxidized coenzyme F420-(gamma-L-Glu)(n) + H(+). Component of the F(420)H(2) dehydrogenase (FPO complex) which is part of the energy-conserving F(420)H(2):heterodisulfide oxidoreductase system. The membrane-bound electron transfer system of the complex plays an important role in the metabolism of methylotrophic methanogens when the organisms grow on methanol or methylamines. Catalyzes the oxidation of methanophenazine to dihydromethanophenazine. It shuttles electrons from F(420)H(2), via FAD and iron-sulfur (Fe-S) centers, to methanophenazine (an electron carrier in the membrane). It couples the redox reaction to proton translocation (for every two electrons transferred, two hydrogen ions are translocated across the cytoplasmic membrane), and thus conserves the redox energy in a proton gradient. It also catalyzes the oxidation of F(420)H(2) with quinones such as 2,3-dimethyl-1,4-naphthoquinone, 2-methyl-1,4-naphthoquinone and tetramethyl-p-benzoquinone. The protein is F(420)H(2) dehydrogenase subunit J (fpoJ) of Methanosarcina mazei (strain ATCC BAA-159 / DSM 3647 / Goe1 / Go1 / JCM 11833 / OCM 88) (Methanosarcina frisia).